Reading from the N-terminus, the 356-residue chain is Phosphoserine aminotransferase (356 aa).

Arg41 contributes to the L-glutamate binding site. Pyridoxal 5'-phosphate-binding positions include 76–77 (AS), Trp102, Thr150, Asp169, and Gln192. Lys193 bears the N6-(pyridoxal phosphate)lysine mark. 234-235 (NT) lines the pyridoxal 5'-phosphate pocket.

It belongs to the class-V pyridoxal-phosphate-dependent aminotransferase family. SerC subfamily. As to quaternary structure, homodimer. Requires pyridoxal 5'-phosphate as cofactor.

The protein resides in the cytoplasm. The catalysed reaction is O-phospho-L-serine + 2-oxoglutarate = 3-phosphooxypyruvate + L-glutamate. The enzyme catalyses 4-(phosphooxy)-L-threonine + 2-oxoglutarate = (R)-3-hydroxy-2-oxo-4-phosphooxybutanoate + L-glutamate. The protein operates within amino-acid biosynthesis; L-serine biosynthesis; L-serine from 3-phospho-D-glycerate: step 2/3. Its pathway is cofactor biosynthesis; pyridoxine 5'-phosphate biosynthesis; pyridoxine 5'-phosphate from D-erythrose 4-phosphate: step 3/5. In terms of biological role, catalyzes the reversible conversion of 3-phosphohydroxypyruvate to phosphoserine and of 3-hydroxy-2-oxo-4-phosphonooxybutanoate to phosphohydroxythreonine. This is Phosphoserine aminotransferase from Flavobacterium psychrophilum (strain ATCC 49511 / DSM 21280 / CIP 103535 / JIP02/86).